Consider the following 480-residue polypeptide: Aspartyl/glutamyl-tRNA(Asn/Gln) amidotransferase subunit B (480 aa).

The protein belongs to the GatB/GatE family. GatB subfamily. In terms of assembly, heterotrimer of A, B and C subunits.

The catalysed reaction is L-glutamyl-tRNA(Gln) + L-glutamine + ATP + H2O = L-glutaminyl-tRNA(Gln) + L-glutamate + ADP + phosphate + H(+). The enzyme catalyses L-aspartyl-tRNA(Asn) + L-glutamine + ATP + H2O = L-asparaginyl-tRNA(Asn) + L-glutamate + ADP + phosphate + 2 H(+). Its function is as follows. Allows the formation of correctly charged Asn-tRNA(Asn) or Gln-tRNA(Gln) through the transamidation of misacylated Asp-tRNA(Asn) or Glu-tRNA(Gln) in organisms which lack either or both of asparaginyl-tRNA or glutaminyl-tRNA synthetases. The reaction takes place in the presence of glutamine and ATP through an activated phospho-Asp-tRNA(Asn) or phospho-Glu-tRNA(Gln). This Caldicellulosiruptor saccharolyticus (strain ATCC 43494 / DSM 8903 / Tp8T 6331) protein is Aspartyl/glutamyl-tRNA(Asn/Gln) amidotransferase subunit B.